Consider the following 338-residue polypeptide: Lipoate-protein ligase A (338 aa).

Positions 29–216 (PATQRVLFLW…AFFAHYGERI (188 aa)) constitute a BPL/LPL catalytic domain. ATP-binding positions include arginine 71, 76–79 (GAVF), and lysine 134. A (R)-lipoate-binding site is contributed by lysine 134.

It belongs to the LplA family. As to quaternary structure, monomer.

Its subcellular location is the cytoplasm. The catalysed reaction is L-lysyl-[lipoyl-carrier protein] + (R)-lipoate + ATP = N(6)-[(R)-lipoyl]-L-lysyl-[lipoyl-carrier protein] + AMP + diphosphate + H(+). Its pathway is protein modification; protein lipoylation via exogenous pathway; protein N(6)-(lipoyl)lysine from lipoate: step 1/2. It functions in the pathway protein modification; protein lipoylation via exogenous pathway; protein N(6)-(lipoyl)lysine from lipoate: step 2/2. Catalyzes both the ATP-dependent activation of exogenously supplied lipoate to lipoyl-AMP and the transfer of the activated lipoyl onto the lipoyl domains of lipoate-dependent enzymes. This Salmonella typhi protein is Lipoate-protein ligase A.